Reading from the N-terminus, the 950-residue chain is Zinc finger CCCH domain-containing protein 3 (950 aa).

Disordered stretches follow at residues 32–106 (GNSS…HPEP), 127–182 (IKPP…TKVG), 201–220 (VVKS…RTVS), and 314–489 (SEKS…VLRK). Residues 56-74 (RPSRRGFSSHHGPSWRKKY) are compositionally biased toward basic residues. The segment covering 76-96 (LVNQPVESSDPASDPAFQTSL) has biased composition (polar residues). A compositionally biased stretch (polar residues) spans 327–338 (PRTTLESGNKAT). The span at 344–360 (KTEKPQPKVDPEVRPEK) shows a compositional bias: basic and acidic residues. Low complexity predominate over residues 370-388 (SPSKYKWKASSPSASSSSS). Over residues 402 to 412 (SQLSPVPSRPT) the composition is skewed to polar residues. Serine 405 carries the post-translational modification Phosphoserine. The span at 438–449 (VKSRTKIIRRRG) shows a compositional bias: basic residues. Residues 460–470 (SPTTATTSKNH) are compositionally biased toward polar residues. C3H1-type zinc fingers lie at residues 662–690 (EKKR…HDPE), 694–717 (VCTR…HHVS), 718–744 (KEKM…HVYV), 745–772 (SRKA…HTLL), and 773–795 (CPDF…HRNQ). The tract at residues 793–950 (RNQKRHGRRT…GKPLHIKPRL (158 aa)) is disordered. Positions 828–838 (PTTTQRSVRQM) are enriched in polar residues. Residues 839–849 (SSGLASGAEAP) are compositionally biased toward low complexity. Residues serine 851 and serine 855 each carry the phosphoserine modification. Positions 857–888 (RVLASTSTLSSKATAASSPSPSPSTSSPAPSL) are enriched in low complexity. Polar residues predominate over residues 914–928 (SLHSSPSPGGQTETG). 3 positions are modified to phosphoserine: serine 918, serine 920, and serine 934.

As to quaternary structure, interacts with SMAD1, SMAD3, SMAD4, CPSF2 and CPSF3.

The protein localises to the nucleus. Functionally, required for the export of polyadenylated mRNAs from the nucleus. Enhances ACVR1B-induced SMAD-dependent transcription. Binds to single-stranded DNA but not to double-stranded DNA in vitro. Involved in RNA cleavage. The chain is Zinc finger CCCH domain-containing protein 3 (Zc3h3) from Mus musculus (Mouse).